A 24-amino-acid polypeptide reads, in one-letter code: Brevinin-1Ba (24 aa).

A disulfide bond links Cys-18 and Cys-24.

In terms of tissue distribution, expressed by the skin glands.

The protein localises to the secreted. In terms of biological role, antibacterial activity against Gram-positive bacterium S.aureus. The protein is Brevinin-1Ba of Lithobates berlandieri (Rio Grande leopard frog).